A 751-amino-acid polypeptide reads, in one-letter code: Zinc finger protein 337 (751 aa).

The KRAB domain maps to Leu12 to Ala83. Positions Gln101–Asp116 are enriched in low complexity. Residues Gln101 to Thr163 form a disordered region. The C2H2-type 1; degenerate zinc finger occupies Phe180–His202. C2H2-type zinc fingers lie at residues Phe208 to His230, Tyr236 to His258, Phe264 to His286, Tyr292 to His314, Phe320 to His342, Tyr348 to His370, Phe376 to His398, Phe404 to His426, and Phe432 to His454. A Glycyl lysine isopeptide (Lys-Gly) (interchain with G-Cter in SUMO2) cross-link involves residue Lys458. C2H2-type zinc fingers lie at residues Phe460 to His482, Tyr488 to His510, Phe516 to His538, Phe544 to His566, Phe572 to His594, Phe600 to His622, Phe628 to His650, Phe656 to His679, Phe685 to His707, and Tyr713 to His735.

This sequence belongs to the krueppel C2H2-type zinc-finger protein family.

It is found in the nucleus. May be involved in transcriptional regulation. In Homo sapiens (Human), this protein is Zinc finger protein 337 (ZNF337).